We begin with the raw amino-acid sequence, 550 residues long: Centrosomal and chromosomal factor (550 aa).

3 coiled-coil regions span residues 20-44 (SALS…QQHH), 105-126 (VANS…QQQQ), and 239-274 (ATSA…QQAH). 4 disordered regions span residues 21-145 (ALSA…KDYS), 208-320 (LSSG…HAAN), 361-380 (SHYA…RDAM), and 392-465 (SGKL…SASV). 3 stretches are compositionally biased toward low complexity: residues 24–71 (ALQQ…QQQQ), 81–136 (ANTS…NAAP), and 221–320 (AAVA…HAAN). Composition is skewed to low complexity over residues 396–412 (QQSQ…QQHC) and 450–462 (SATP…SGGS).

In terms of assembly, homodimer. Interacts with esc, Trl, E(z), scm and ph-p in vitro. Found in vivo in an esc-containing complex, which may be the Esc/E(z) complex. Also found in vivo in a Pc-containing complex that may be the PRC1 complex, but does not interact with Pc directly. Interacts with cyclin CycG.

Its subcellular location is the nucleus. It localises to the cytoplasm. It is found in the cytoskeleton. The protein resides in the microtubule organizing center. The protein localises to the centrosome. Its subcellular location is the chromosome. Functionally, essential protein required for proper condensation of mitotic chromosomes and progression through mitosis. Binds to specific polytene chromosome sites, many of which are shared with the posterior sex combs (Psc) protein. Involved in maintaining Abd-B repression outside its normal expression domain. The protein is Centrosomal and chromosomal factor (corto) of Drosophila melanogaster (Fruit fly).